A 793-amino-acid chain; its full sequence is Phenylalanine--tRNA ligase beta subunit (793 aa).

The region spanning 39 to 148 (AGQFTHVIVA…DEAPIGMDLR (110 aa)) is the tRNA-binding domain. Residues 401–477 (PGTVSFLFDT…RLYGYDKLQA (77 aa)) enclose the B5 domain. Mg(2+) contacts are provided by D455, D461, E464, and E465. The FDX-ACB domain maps to 698 to 792 (SKYPQIRRDL…LENEFSILLR (95 aa)).

It belongs to the phenylalanyl-tRNA synthetase beta subunit family. Type 1 subfamily. Tetramer of two alpha and two beta subunits. Mg(2+) serves as cofactor.

It is found in the cytoplasm. The catalysed reaction is tRNA(Phe) + L-phenylalanine + ATP = L-phenylalanyl-tRNA(Phe) + AMP + diphosphate + H(+). The protein is Phenylalanine--tRNA ligase beta subunit of Legionella pneumophila (strain Paris).